We begin with the raw amino-acid sequence, 249 residues long: NAD kinase (249 aa).

D49 (proton acceptor) is an active-site residue. NAD(+) contacts are provided by residues 49 to 50 (DG), R54, 115 to 116 (NE), K126, R143, D145, I153, 156 to 161 (TGYAFS), A180, and Q211.

The protein belongs to the NAD kinase family. In terms of assembly, homotetramer. The cofactor is a divalent metal cation.

It localises to the cytoplasm. It carries out the reaction NAD(+) + ATP = ADP + NADP(+) + H(+). In terms of biological role, involved in the regulation of the intracellular balance between NAD(H) and NADP(H), and is a key enzyme in the biosynthesis of NADP. Catalyzes specifically the phosphorylation on 2'-hydroxyl of the adenosine moiety of NAD to yield NADP. This Archaeoglobus fulgidus (strain ATCC 49558 / DSM 4304 / JCM 9628 / NBRC 100126 / VC-16) protein is NAD kinase.